A 168-amino-acid chain; its full sequence is Avenin-like a1 (168 aa).

The signal sequence occupies residues 1–19 (MKTMFLLALLAFTATSAVA).

Belongs to the prolamin family. In terms of processing, contains 7 disulfide bonds.

Seed storage protein. Not integrated in the gluten polymer through disulfide bonds, unless incorporated by reduction and reoxidation during dough making. Increases dough strength and bread volume, but decreases dough stability when added into a base wheat flour. This Triticum aestivum (Wheat) protein is Avenin-like a1 (AVNLA).